The chain runs to 108 residues: uncharacterized protein (108 aa).

Residues 1 to 14 (MSDSNSRLVYSTET) show a composition bias toward polar residues. The tract at residues 1 to 31 (MSDSNSRLVYSTETGRIDEPKAAPVRPKGDG) is disordered. Residues 15–31 (GRIDEPKAAPVRPKGDG) are compositionally biased toward basic and acidic residues.

It belongs to the SUI1 family.

This is an uncharacterized protein from Escherichia coli (strain K12).